A 145-amino-acid chain; its full sequence is Small ribosomal subunit protein uS12A (145 aa).

Proline 64 carries the post-translational modification Hydroxyproline.

The protein belongs to the universal ribosomal protein uS12 family.

The polypeptide is Small ribosomal subunit protein uS12A (RPS23A) (Naumovozyma castellii (Yeast)).